A 144-amino-acid polypeptide reads, in one-letter code: Small ribosomal subunit protein uS19 (144 aa).

It belongs to the universal ribosomal protein uS19 family.

This is Small ribosomal subunit protein uS19 (rps15) from Dictyostelium discoideum (Social amoeba).